The sequence spans 102 residues: Integration host factor subunit alpha (102 aa).

Belongs to the bacterial histone-like protein family. Heterodimer of an alpha and a beta chain.

This protein is one of the two subunits of integration host factor, a specific DNA-binding protein that functions in genetic recombination as well as in transcriptional and translational control. In Albidiferax ferrireducens (strain ATCC BAA-621 / DSM 15236 / T118) (Rhodoferax ferrireducens), this protein is Integration host factor subunit alpha.